The sequence spans 410 residues: Mating-type locus allele B5 protein (410 aa).

Residues 1–110 form a variable domain between B alleles region; it reads MSSDPNFSLT…FNVVSPAVVC (110 aa). Residues 107-184 constitute a DNA-binding region (homeobox; TALE-type); it reads AVVCRNLSED…NARRRSGWSH (78 aa). A highly conserved between B alleles region spans residues 111-410; that stretch reads RNLSEDLPAY…PFLCLSVAFV (300 aa). Disordered stretches follow at residues 201–241, 275–336, and 366–395; these read VRAK…TPAD, NKKT…PELS, and ILQSPTVKARGNRKVKALPKRAGKQQPDEV. The segment covering 206–222 has biased composition (low complexity); it reads SSSNQSTPPSPTSEYPS. The short motif at 276–308 is the Nuclear localization signal element; sequence KKTPKPGMPRPVTTVTKRQPARKTKPAAKPKSR. Residues 294 to 307 are compositionally biased toward basic residues; it reads QPARKTKPAAKPKS. The span at 312–336 shows a compositional bias: polar residues; that stretch reads PRASTTPSIDSTLDSSKLESTPELS. The not essential for B5 function stretch occupies residues 333–410; it reads PELSMCSTAD…PFLCLSVAFV (78 aa). The segment covering 375 to 388 has biased composition (basic residues); the sequence is RGNRKVKALPKRAG.

Belongs to the TALE/M-ATYP homeobox family.

The protein resides in the nucleus. Its function is as follows. The B locus has at least 25 alleles, and any combination of two different B alleles yields a multimeric regulatory protein, that activates genes responsible for the pathogenicity and for the sexual development of the fungus within the corn plant. This Mycosarcoma maydis (Corn smut fungus) protein is Mating-type locus allele B5 protein.